The sequence spans 121 residues: Large ribosomal subunit protein bL19 (121 aa).

This sequence belongs to the bacterial ribosomal protein bL19 family.

Functionally, this protein is located at the 30S-50S ribosomal subunit interface and may play a role in the structure and function of the aminoacyl-tRNA binding site. This chain is Large ribosomal subunit protein bL19, found in Acidothermus cellulolyticus (strain ATCC 43068 / DSM 8971 / 11B).